Here is a 182-residue protein sequence, read N- to C-terminus: Adenine phosphoribosyltransferase (182 aa).

This sequence belongs to the purine/pyrimidine phosphoribosyltransferase family. Homodimer.

Its subcellular location is the cytoplasm. The catalysed reaction is AMP + diphosphate = 5-phospho-alpha-D-ribose 1-diphosphate + adenine. The protein operates within purine metabolism; AMP biosynthesis via salvage pathway; AMP from adenine: step 1/1. Catalyzes a salvage reaction resulting in the formation of AMP, that is energically less costly than de novo synthesis. The sequence is that of Adenine phosphoribosyltransferase from Campylobacter curvus (strain 525.92).